The sequence spans 149 residues: 3-dehydroquinate dehydratase (149 aa).

The Proton acceptor role is filled by tyrosine 24. Asparagine 76, histidine 82, and aspartate 89 together coordinate substrate. The active-site Proton donor is histidine 102. Substrate-binding positions include 103–104 (LS) and arginine 113.

It belongs to the type-II 3-dehydroquinase family. As to quaternary structure, homododecamer.

The catalysed reaction is 3-dehydroquinate = 3-dehydroshikimate + H2O. The protein operates within metabolic intermediate biosynthesis; chorismate biosynthesis; chorismate from D-erythrose 4-phosphate and phosphoenolpyruvate: step 3/7. Catalyzes a trans-dehydration via an enolate intermediate. This chain is 3-dehydroquinate dehydratase, found in Acinetobacter baylyi (strain ATCC 33305 / BD413 / ADP1).